The chain runs to 418 residues: Homoaconitase large subunit (418 aa).

[4Fe-4S] cluster is bound by residues Cys292, Cys352, and Cys355.

It belongs to the aconitase/IPM isomerase family. In terms of assembly, heterodimer of HacA and HacB. [4Fe-4S] cluster is required as a cofactor.

The catalysed reaction is (2R,3S)-homoisocitrate = cis-homoaconitate + H2O. It functions in the pathway amino-acid biosynthesis; L-lysine biosynthesis via AAA pathway; L-alpha-aminoadipate from 2-oxoglutarate: step 3/5. With respect to regulation, is not inhibited by lysine. In terms of biological role, catalyzes the reversible hydration of cis-homoaconitate ((Z)-but-1-ene-1,2,4-tricarboxylate) to homoisocitrate ((1R,2S)-1-hydroxybutane-1,2,4-tricarboxylate). Can catalyze neither the dehydration of (R)-homocitrate ((2R)-2-hydroxybutane-1,2,4-tricarboxylate) into cis-homoaconitate in vitro, nor the reverse reaction. Is not active toward (S)-homocitrate, cis-aconitate or citrate as substrate. The sequence is that of Homoaconitase large subunit (hacA) from Thermus thermophilus (strain ATCC BAA-163 / DSM 7039 / HB27).